Reading from the N-terminus, the 139-residue chain is Small ribosomal subunit protein bS16 (139 aa).

The disordered stretch occupies residues 84–139 (KGEPAPAPLLQPAEKAARPSFEAIGGEDEGKGEAITQKKKADKRDEAAAESSASEA).

The protein belongs to the bacterial ribosomal protein bS16 family.

This is Small ribosomal subunit protein bS16 from Streptomyces lividans.